We begin with the raw amino-acid sequence, 423 residues long: Polyglutamylase complex subunit TTLL1 (423 aa).

The TTL domain maps to 1-367 (MAGRVKWVTD…NGEIPDCKWN (367 aa)). Residues Lys138, 144–145 (QG), 181–184 (SLYI), and 194–196 (KFD) each bind ATP. An a protein-binding site is contributed by Gln144. Residue Arg220 coordinates L-glutamate. 241–242 (TN) is an ATP binding site. An L-glutamate-binding site is contributed by Lys259. Asp313, Glu326, and Asn328 together coordinate Mg(2+). Lys344 serves as a coordination point for L-glutamate. The segment at 390-423 (DGAERELRSRPGQPVGPRTGRSRDSGRNVLTTWK) is disordered.

The protein belongs to the tubulin polyglutamylase family. As to quaternary structure, part of the neuronal tubulin polyglutamylase complex which contains TPGS1, TPGS2, TTLL1, LRRC49 and NICN1. Interacts with PCM1, CSTPP1 and LRRC49. It depends on Mg(2+) as a cofactor.

The protein localises to the cytoplasm. Its subcellular location is the cytoskeleton. The protein resides in the cilium basal body. It localises to the cilium axoneme. It is found in the cell projection. The protein localises to the cilium. Its subcellular location is the flagellum. It catalyses the reaction (L-glutamyl)(n)-gamma-L-glutamyl-L-glutamyl-[protein] + L-glutamate + ATP = (L-glutamyl)(n+1)-gamma-L-glutamyl-L-glutamyl-[protein] + ADP + phosphate + H(+). In terms of biological role, catalytic subunit of a polyglutamylase complex which modifies tubulin, generating side chains of glutamate on the gamma-carboxyl group of specific glutamate residues within the C-terminal tail of tubulin. Probably involved in the side-chain elongation step of the polyglutamylation reaction rather than the initiation step. Modifies both alpha- and beta-tubulins with a preference for the alpha-tail. Unlike most polyglutamylases of the tubulin--tyrosine ligase family, only displays a catalytic activity when in complex with other proteins as it is most likely lacking domains important for autonomous activity. Part of the neuronal tubulin polyglutamylase complex. Mediates cilia and flagella polyglutamylation which is essential for their biogenesis and motility. Involved in respiratory motile cilia function through the regulation of beating asymmetry. Essential for sperm flagella biogenesis, motility and male fertility. Involved in KLF4 glutamylation which impedes its ubiquitination, thereby leading to somatic cell reprogramming, pluripotency maintenance and embryogenesis. This Rattus norvegicus (Rat) protein is Polyglutamylase complex subunit TTLL1 (Ttll1).